Here is a 226-residue protein sequence, read N- to C-terminus: Ribosomal RNA small subunit methyltransferase G (226 aa).

S-adenosyl-L-methionine is bound by residues Gly95, Leu100, 146–147 (VE), and Arg159.

This sequence belongs to the methyltransferase superfamily. RNA methyltransferase RsmG family.

Its subcellular location is the cytoplasm. The catalysed reaction is guanosine(527) in 16S rRNA + S-adenosyl-L-methionine = N(7)-methylguanosine(527) in 16S rRNA + S-adenosyl-L-homocysteine. Its function is as follows. Specifically methylates the N7 position of guanine in position 527 of 16S rRNA. The chain is Ribosomal RNA small subunit methyltransferase G from Acidovorax ebreus (strain TPSY) (Diaphorobacter sp. (strain TPSY)).